We begin with the raw amino-acid sequence, 536 residues long: CTP synthase (536 aa).

The tract at residues 1 to 267 (MTKFIFVTGG…DDIVIKRLEL (267 aa)) is amidoligase domain. Serine 13 contributes to the CTP binding site. Serine 13 serves as a coordination point for UTP. An ATP-binding site is contributed by 14-19 (SLGKGI). Position 54 (tyrosine 54) interacts with L-glutamine. Aspartate 71 is a binding site for ATP. Mg(2+)-binding residues include aspartate 71 and glutamate 141. CTP is bound by residues 148–150 (DIE), 188–193 (KTKPTQ), and lysine 224. UTP contacts are provided by residues 188 to 193 (KTKPTQ) and lysine 224. 240–242 (RDA) serves as a coordination point for ATP. One can recognise a Glutamine amidotransferase type-1 domain in the interval 293–535 (TIGLVGKYVS…IEASLNHQQS (243 aa)). Glycine 355 is a binding site for L-glutamine. The active-site Nucleophile; for glutamine hydrolysis is cysteine 382. L-glutamine-binding positions include 383 to 386 (LGMQ), glutamate 406, and arginine 463. Catalysis depends on residues histidine 508 and glutamate 510.

This sequence belongs to the CTP synthase family. In terms of assembly, homotetramer.

It catalyses the reaction UTP + L-glutamine + ATP + H2O = CTP + L-glutamate + ADP + phosphate + 2 H(+). It carries out the reaction L-glutamine + H2O = L-glutamate + NH4(+). The catalysed reaction is UTP + NH4(+) + ATP = CTP + ADP + phosphate + 2 H(+). Its pathway is pyrimidine metabolism; CTP biosynthesis via de novo pathway; CTP from UDP: step 2/2. Its activity is regulated as follows. Allosterically activated by GTP, when glutamine is the substrate; GTP has no effect on the reaction when ammonia is the substrate. The allosteric effector GTP functions by stabilizing the protein conformation that binds the tetrahedral intermediate(s) formed during glutamine hydrolysis. Inhibited by the product CTP, via allosteric rather than competitive inhibition. Catalyzes the ATP-dependent amination of UTP to CTP with either L-glutamine or ammonia as the source of nitrogen. Regulates intracellular CTP levels through interactions with the four ribonucleotide triphosphates. The polypeptide is CTP synthase (Staphylococcus saprophyticus subsp. saprophyticus (strain ATCC 15305 / DSM 20229 / NCIMB 8711 / NCTC 7292 / S-41)).